A 1859-amino-acid polypeptide reads, in one-letter code: U3 small nucleolar RNA-associated protein 10 (1859 aa).

A helical membrane pass occupies residues 258–278; that stretch reads LGAYSVLAVLSAVAPLSIELL. One copy of the HEAT 1 repeat lies at 578-616; it reads VLPLLLIAFNDPSSHIRAAFAQLVQLVSEITKAIHENKK. A helical membrane pass occupies residues 1392–1412; the sequence is IVIASISAIVSIVNVLGIKTL. One copy of the HEAT 2 repeat lies at 1819–1857; that stretch reads LVPHIAELLEDDDEAVEIEVREGLVRVIEKVLGEPLDRY.

This sequence belongs to the HEATR1/UTP10 family. As to quaternary structure, component of the ribosomal small subunit (SSU) processome.

It is found in the nucleus. Its subcellular location is the nucleolus. The protein resides in the membrane. In terms of biological role, involved in nucleolar processing of pre-18S ribosomal RNA. Involved in ribosome biosynthesis. The protein is U3 small nucleolar RNA-associated protein 10 of Lodderomyces elongisporus (strain ATCC 11503 / CBS 2605 / JCM 1781 / NBRC 1676 / NRRL YB-4239) (Yeast).